The sequence spans 782 residues: Host cell factor homolog hcf-1 (782 aa).

Residues 1–25 form a disordered region; sequence MDEDVGLEATNYSRGDESRSEEQEK. Over residues 14-25 the composition is skewed to basic and acidic residues; it reads RGDESRSEEQEK. 5 Kelch repeats span residues 55–103, 105–151, 161–222, 227–271, and 280–324; these read LIVI…SLGN, IYRF…RIGH, KAYV…IYEK, RMVV…PRSL, and KMFV…VPLH. Phosphoserine is present on residues S423, S431, and S449. The span at 423 to 434 shows a compositional bias: polar residues; the sequence is SPIKRATTSPRK. Residues 423–553 form a disordered region; that stretch reads SPIKRATTSP…EENGDDDLPW (131 aa). 2 stretches are compositionally biased toward polar residues: residues 456–469 and 496–513; these read TAPS…TTYT and TASP…SSTC. Residue S498 is modified to Phosphoserine. Over residues 537-552 the composition is skewed to acidic residues; sequence GETDEMKEENGDDDLP.

In terms of assembly, interacts with daf-16/FOXO. Interacts with deacetylase sir-2.1. Interacts with the 14-3-3 family proteins ftt-2 and par-5. Phosphorylated at multiple serine residues. Phosphorylation is developmentally regulated, occurring in embryos but not L1 larvae. Phosphorylation may be cell-cycle-regulated.

The protein resides in the nucleus. Its function is as follows. Transcriptional coregulator. Involved in control of the cell cycle and in modulating mitotic histone phosphorylation. Plays a role in modulating lifespan by regulating the transcriptional activity of daf-16/Forkhead box protein O, in concert with protein deacetylase sir-2.1/SIRT1, and perhaps acting independently of the Insulin/IGF-1-like signaling (IIS) mediated pathway. Negatively modulates responses to environmental stresses, including oxidative stress, heat stress, and exposure to heavy metals; acting via regulation of the transcription factors daf-16 and skn-1. May play a role in pharyngeal development via positive modulation of expression of sup-35. The sequence is that of Host cell factor homolog hcf-1 from Caenorhabditis elegans.